We begin with the raw amino-acid sequence, 245 residues long: UPF0246 protein cgR_1824 (245 aa).

Belongs to the UPF0246 family.

The sequence is that of UPF0246 protein cgR_1824 from Corynebacterium glutamicum (strain R).